A 321-amino-acid polypeptide reads, in one-letter code: Glycerol-3-phosphate phosphatase (321 aa).

The Nucleophile role is filled by aspartate 34. Mg(2+) is bound by residues aspartate 34, aspartate 36, and aspartate 260. Residue aspartate 36 is the Proton donor of the active site.

Belongs to the HAD-like hydrolase superfamily. CbbY/CbbZ/Gph/YieH family. Homodimer. Mg(2+) serves as cofactor. As to expression, detected in all tissues including red cells, lymphocytes and cultured fibroblasts (at protein level). The highest activities occur in skeletal muscle and cardiac muscle.

The enzyme catalyses O-phospho-L-tyrosyl-[protein] + H2O = L-tyrosyl-[protein] + phosphate. It carries out the reaction sn-glycerol 1-phosphate + H2O = glycerol + phosphate. The catalysed reaction is sn-glycerol 3-phosphate + H2O = glycerol + phosphate. In terms of biological role, glycerol-3-phosphate phosphatase hydrolyzing glycerol-3-phosphate into glycerol. Thereby, regulates the cellular levels of glycerol-3-phosphate a metabolic intermediate of glucose, lipid and energy metabolism. Was also shown to have a 2-phosphoglycolate phosphatase activity and a tyrosine-protein phosphatase activity. However, their physiological relevance is unclear. In vitro, also has a phosphatase activity toward ADP, ATP, GDP and GTP. In Homo sapiens (Human), this protein is Glycerol-3-phosphate phosphatase.